A 446-amino-acid chain; its full sequence is Chromosomal replication initiator protein DnaA (446 aa).

Residues Met-1–Pro-81 are domain I, interacts with DnaA modulators. Residues Pro-81 to Ser-109 are domain II. The interval Met-110–Ser-326 is domain III, AAA+ region. Positions 154, 156, 157, and 158 each coordinate ATP. The domain IV, binds dsDNA stretch occupies residues Ser-327–Lys-446.

Belongs to the DnaA family. Oligomerizes as a right-handed, spiral filament on DNA at oriC.

The protein resides in the cytoplasm. Functionally, plays an essential role in the initiation and regulation of chromosomal replication. ATP-DnaA binds to the origin of replication (oriC) to initiate formation of the DNA replication initiation complex once per cell cycle. Binds the DnaA box (a 9 base pair repeat at the origin) and separates the double-stranded (ds)DNA. Forms a right-handed helical filament on oriC DNA; dsDNA binds to the exterior of the filament while single-stranded (ss)DNA is stabiized in the filament's interior. The ATP-DnaA-oriC complex binds and stabilizes one strand of the AT-rich DNA unwinding element (DUE), permitting loading of DNA polymerase. After initiation quickly degrades to an ADP-DnaA complex that is not apt for DNA replication. Binds acidic phospholipids. This is Chromosomal replication initiator protein DnaA from Bacillus cereus (strain G9842).